The sequence spans 302 residues: Sulfate adenylyltransferase subunit 2 (302 aa).

Positions 280-302 (RQGRVIDHDSSGSMEKKKREGYF) are disordered.

This sequence belongs to the PAPS reductase family. CysD subfamily. In terms of assembly, heterodimer composed of CysD, the smaller subunit, and CysN.

It catalyses the reaction sulfate + ATP + H(+) = adenosine 5'-phosphosulfate + diphosphate. Its pathway is sulfur metabolism; hydrogen sulfide biosynthesis; sulfite from sulfate: step 1/3. With CysN forms the ATP sulfurylase (ATPS) that catalyzes the adenylation of sulfate producing adenosine 5'-phosphosulfate (APS) and diphosphate, the first enzymatic step in sulfur assimilation pathway. APS synthesis involves the formation of a high-energy phosphoric-sulfuric acid anhydride bond driven by GTP hydrolysis by CysN coupled to ATP hydrolysis by CysD. This Shewanella amazonensis (strain ATCC BAA-1098 / SB2B) protein is Sulfate adenylyltransferase subunit 2.